The sequence spans 325 residues: LIM and senescent cell antigen-like-containing domain protein 1 (325 aa).

Alanine 2 carries the N-acetylalanine modification. LIM zinc-binding domains are found at residues 10–62 (CERC…CEHD), 71–121 (CHQC…CRPC), 135–184 (CQKC…CLPC), 193–243 (CGAC…CETH), and 252–303 (CFHC…CKKC).

In terms of assembly, component of the heterotrimeric IPP (ILK-PINCH-PARVIN) complex composed of ILK, LIMS1/PINCH and PARVA; the complex binds to F-actin via the C-terminal tail of LIMS1 and the N-terminal region of PARVA, promoting F-actin filament bundling. Formation of the IPP complex is dependent on protein kinase C and precedes integrin-mediated cell adhesion and spreading. Competes with LIMS2 for interaction with ILK. Interacts with SH3/SH2 adapter NCK2, thereby linking the complex to cell surface receptors. Interacts (via LIM zinc-binding 5) with TGFB1I1.

The protein localises to the cell junction. It is found in the focal adhesion. It localises to the cell membrane. Within the IPP (ILK-PINCH-PARVIN) complex, binds to F-actin, promoting F-actin bundling, a process required to generate force for actin cytoskeleton reorganization and subsequent dynamic cell adhesion events such as cell spreading and migration. In Mus musculus (Mouse), this protein is LIM and senescent cell antigen-like-containing domain protein 1 (Lims1).